We begin with the raw amino-acid sequence, 238 residues long: Pyridoxine 5'-phosphate synthase (238 aa).

Asn-7 provides a ligand contact to 3-amino-2-oxopropyl phosphate. 9–10 provides a ligand contact to 1-deoxy-D-xylulose 5-phosphate; the sequence is DH. Arg-18 provides a ligand contact to 3-amino-2-oxopropyl phosphate. His-43 functions as the Proton acceptor in the catalytic mechanism. Residues Arg-45 and His-50 each contribute to the 1-deoxy-D-xylulose 5-phosphate site. Catalysis depends on Glu-70, which acts as the Proton acceptor. Thr-100 provides a ligand contact to 1-deoxy-D-xylulose 5-phosphate. The Proton donor role is filled by His-190. Residues Gly-191 and 212 to 213 each bind 3-amino-2-oxopropyl phosphate; that span reads GH.

Belongs to the PNP synthase family. Homooctamer; tetramer of dimers.

The protein localises to the cytoplasm. The catalysed reaction is 3-amino-2-oxopropyl phosphate + 1-deoxy-D-xylulose 5-phosphate = pyridoxine 5'-phosphate + phosphate + 2 H2O + H(+). The protein operates within cofactor biosynthesis; pyridoxine 5'-phosphate biosynthesis; pyridoxine 5'-phosphate from D-erythrose 4-phosphate: step 5/5. Its function is as follows. Catalyzes the complicated ring closure reaction between the two acyclic compounds 1-deoxy-D-xylulose-5-phosphate (DXP) and 3-amino-2-oxopropyl phosphate (1-amino-acetone-3-phosphate or AAP) to form pyridoxine 5'-phosphate (PNP) and inorganic phosphate. The polypeptide is Pyridoxine 5'-phosphate synthase (Prochlorococcus marinus (strain MIT 9515)).